The primary structure comprises 314 residues: Mitochondrial thiamine pyrophosphate carrier 1 (314 aa).

The next 6 membrane-spanning stretches (helical) occupy residues 14 to 30 (VAAWKTLLAGAVSGLLA), 84 to 100 (LLYVTYGSAQFSSYSLF), 116 to 136 (LVVGAFAGITSSIVSYPFDVL), 170 to 186 (GSIASMTTITLTASIMF), 217 to 233 (SAGTIGGVIAKIITFPL), and 285 to 302 (GILVALSKTIPTTFVSFW). Solcar repeat units lie at residues 14–103 (VAAW…FNRY), 110–195 (EARL…IRIY), and 210–310 (ELAT…AIHY).

The protein belongs to the mitochondrial carrier (TC 2.A.29) family.

The protein resides in the mitochondrion inner membrane. In terms of biological role, mitochondrial transporter that mediates uptake of thiamine pyrophosphate (ThPP) into mitochondria. The sequence is that of Mitochondrial thiamine pyrophosphate carrier 1 (TPC1) from Saccharomyces cerevisiae (strain YJM789) (Baker's yeast).